A 327-amino-acid polypeptide reads, in one-letter code: GTPase Obg (327 aa).

The 159-residue stretch at 1–159 (MQFIDQANII…WEVQLELKLL (159 aa)) folds into the Obg domain. In terms of domain architecture, OBG-type G spans 160-327 (AEVGIIGLPN…PLLSEVWKRI (168 aa)). ATP is bound by residues 166-173 (GLPNAGKS), 191-195 (FTTLI), 213-216 (DIPG), 280-283 (NKME), and 309-311 (SSS). Residues Ser-173 and Thr-193 each coordinate Mg(2+).

Belongs to the TRAFAC class OBG-HflX-like GTPase superfamily. OBG GTPase family. Monomer. Mg(2+) is required as a cofactor.

It is found in the cytoplasm. An essential GTPase which binds GTP, GDP and possibly (p)ppGpp with moderate affinity, with high nucleotide exchange rates and a fairly low GTP hydrolysis rate. Plays a role in control of the cell cycle, stress response, ribosome biogenesis and in those bacteria that undergo differentiation, in morphogenesis control. The chain is GTPase Obg from Prochlorococcus marinus subsp. pastoris (strain CCMP1986 / NIES-2087 / MED4).